The following is a 402-amino-acid chain: NADH-quinone oxidoreductase subunit D (402 aa).

The protein belongs to the complex I 49 kDa subunit family. As to quaternary structure, NDH-1 is composed of 14 different subunits. Subunits NuoB, C, D, E, F, and G constitute the peripheral sector of the complex.

It localises to the cell inner membrane. It catalyses the reaction a quinone + NADH + 5 H(+)(in) = a quinol + NAD(+) + 4 H(+)(out). Functionally, NDH-1 shuttles electrons from NADH, via FMN and iron-sulfur (Fe-S) centers, to quinones in the respiratory chain. The immediate electron acceptor for the enzyme in this species is believed to be ubiquinone. Couples the redox reaction to proton translocation (for every two electrons transferred, four hydrogen ions are translocated across the cytoplasmic membrane), and thus conserves the redox energy in a proton gradient. In Cereibacter sphaeroides (strain ATCC 17025 / ATH 2.4.3) (Rhodobacter sphaeroides), this protein is NADH-quinone oxidoreductase subunit D.